The sequence spans 510 residues: Photosystem II CP47 reaction center protein (510 aa).

Residues 2-16 (GLPWYRVHTVLINDP) lie on the Cytoplasmic side of the membrane. Residues 17–37 (GRLIAAHLMHTALVAGWAGSM) traverse the membrane as a helical segment. At 38–94 (ALYELATFDPSDPVLNPMWRQGMFVLPFMARLGVTGSWSGWSITGETGIDPGFWSFE) the chain is on the lumenal side. A helical membrane pass occupies residues 95–116 (GVALAHIVLSGLLFLAACWHWV). The Cytoplasmic portion of the chain corresponds to 117 to 134 (YWDLELFRDPRTGEPALD). A helical membrane pass occupies residues 135–157 (LPKMFGIHLFLAGLLCFGFGAFH). Residues 158–196 (LTGLFGPGMWVSDPYGLTGSVQPVAPEWGPDGFNPYNPG) are Lumenal-facing. A helical membrane pass occupies residues 197–218 (GVVAHHIAAGIVGIIAGLFHIL). Topologically, residues 219 to 233 (VRPPQRLYKALRMGN) are cytoplasmic. Residues 234 to 254 (IETVLSSSIAAVFFAAFVVAG) form a helical membrane-spanning segment. The Lumenal segment spans residues 255-450 (TMWYGSATTP…GIFRTSPRGW (196 aa)). The chain crosses the membrane as a helical span at residues 451–473 (FTFAHAVFALLFFFGHIWHGART). The Cytoplasmic segment spans residues 474–510 (LFRDVFSGIDPELSPEQVEWGFYQKVGDVTTRRKEAV).

In terms of assembly, PSII is composed of 1 copy each of membrane proteins PsbA, PsbB, PsbC, PsbD, PsbE, PsbF, PsbH, PsbI, PsbJ, PsbK, PsbL, PsbM, PsbT, PsbX, PsbY, PsbZ, Psb30/Ycf12, peripheral proteins PsbO, CyanoQ (PsbQ), PsbU, PsbV and a large number of cofactors. It forms dimeric complexes. Part of a photosystem II (PSII) assembly intermediate complex PSII-I; crystallized from a strain deleted of psbJ, it forms monomeric PSII before addition of the oxygen evolving complex. PSII-I includes 3 assembly factors not found in mature PSII (Psb27, Psb28 and Psb34). The cofactor is Binds multiple chlorophylls. PSII binds additional chlorophylls, carotenoids and specific lipids..

The protein localises to the cellular thylakoid membrane. Its function is as follows. One of the components of the core complex of photosystem II (PSII). It binds chlorophyll and helps catalyze the primary light-induced photochemical processes of PSII. PSII is a light-driven water:plastoquinone oxidoreductase, using light energy to abstract electrons from H(2)O, generating O(2) and a proton gradient subsequently used for ATP formation. In Thermosynechococcus vestitus (strain NIES-2133 / IAM M-273 / BP-1), this protein is Photosystem II CP47 reaction center protein.